The primary structure comprises 197 residues: 3-isopropylmalate dehydratase small subunit (197 aa).

Belongs to the LeuD family. LeuD type 1 subfamily. As to quaternary structure, heterodimer of LeuC and LeuD.

It carries out the reaction (2R,3S)-3-isopropylmalate = (2S)-2-isopropylmalate. Its pathway is amino-acid biosynthesis; L-leucine biosynthesis; L-leucine from 3-methyl-2-oxobutanoate: step 2/4. Catalyzes the isomerization between 2-isopropylmalate and 3-isopropylmalate, via the formation of 2-isopropylmaleate. The sequence is that of 3-isopropylmalate dehydratase small subunit from Corynebacterium glutamicum (strain R).